A 38-amino-acid chain; its full sequence is Large ribosomal subunit protein bL36 (38 aa).

The protein belongs to the bacterial ribosomal protein bL36 family.

The chain is Large ribosomal subunit protein bL36 from Acinetobacter baylyi (strain ATCC 33305 / BD413 / ADP1).